Consider the following 285-residue polypeptide: Elongation factor Ts (285 aa).

Positions 75–78 (TDFV) are involved in Mg(2+) ion dislocation from EF-Tu.

Belongs to the EF-Ts family.

Its subcellular location is the cytoplasm. Associates with the EF-Tu.GDP complex and induces the exchange of GDP to GTP. It remains bound to the aminoacyl-tRNA.EF-Tu.GTP complex up to the GTP hydrolysis stage on the ribosome. This chain is Elongation factor Ts, found in Alcanivorax borkumensis (strain ATCC 700651 / DSM 11573 / NCIMB 13689 / SK2).